The following is a 315-amino-acid chain: Acetyl-coenzyme A carboxylase carboxyl transferase subunit alpha (315 aa).

Residues 40-293 (LQDKSKTLTE…REELSSQLAM (254 aa)) enclose the CoA carboxyltransferase C-terminal domain.

Belongs to the AccA family. Acetyl-CoA carboxylase is a heterohexamer composed of biotin carboxyl carrier protein (AccB), biotin carboxylase (AccC) and two subunits each of ACCase subunit alpha (AccA) and ACCase subunit beta (AccD).

Its subcellular location is the cytoplasm. The enzyme catalyses N(6)-carboxybiotinyl-L-lysyl-[protein] + acetyl-CoA = N(6)-biotinyl-L-lysyl-[protein] + malonyl-CoA. It functions in the pathway lipid metabolism; malonyl-CoA biosynthesis; malonyl-CoA from acetyl-CoA: step 1/1. Functionally, component of the acetyl coenzyme A carboxylase (ACC) complex. First, biotin carboxylase catalyzes the carboxylation of biotin on its carrier protein (BCCP) and then the CO(2) group is transferred by the carboxyltransferase to acetyl-CoA to form malonyl-CoA. The sequence is that of Acetyl-coenzyme A carboxylase carboxyl transferase subunit alpha from Pseudomonas savastanoi pv. phaseolicola (strain 1448A / Race 6) (Pseudomonas syringae pv. phaseolicola (strain 1448A / Race 6)).